The following is a 180-amino-acid chain: MTSRPETKIPDEITSPYPIIGAGTIESGFGRGSAELGIPTANIPVTSELNKLETGIYYGWCRLVPRNQECAAKQRSDGKKVYFNNGTKLADDELETFPMAMSIGWNPFYNNETKTAEVHIIHKFRENFYGADLRYAVMGHIRPELNYTTKEALIADINKDIEITKDALSKPSYEKYRTKI.

Residues Thr-40 and Asn-42 each coordinate Mg(2+). Residue Glu-117 is the Nucleophile of the active site.

It belongs to the flavokinase family. Requires Zn(2+) as cofactor. Mg(2+) is required as a cofactor.

It catalyses the reaction riboflavin + ATP = FMN + ADP + H(+). It functions in the pathway cofactor biosynthesis; FMN biosynthesis; FMN from riboflavin (ATP route): step 1/1. Functionally, catalyzes the phosphorylation of riboflavin (vitamin B2) to form flavin mononucleotide (FMN) coenzyme. The sequence is that of Riboflavin kinase (FMN1) from Meyerozyma guilliermondii (strain ATCC 6260 / CBS 566 / DSM 6381 / JCM 1539 / NBRC 10279 / NRRL Y-324) (Yeast).